The sequence spans 510 residues: Bifunctional purine biosynthesis protein PurH (510 aa).

The MGS-like domain occupies 1 to 142 (MRALLSVSDK…KNFKDVLIVT (142 aa)).

This sequence belongs to the PurH family.

It catalyses the reaction (6R)-10-formyltetrahydrofolate + 5-amino-1-(5-phospho-beta-D-ribosyl)imidazole-4-carboxamide = 5-formamido-1-(5-phospho-D-ribosyl)imidazole-4-carboxamide + (6S)-5,6,7,8-tetrahydrofolate. The enzyme catalyses IMP + H2O = 5-formamido-1-(5-phospho-D-ribosyl)imidazole-4-carboxamide. The protein operates within purine metabolism; IMP biosynthesis via de novo pathway; 5-formamido-1-(5-phospho-D-ribosyl)imidazole-4-carboxamide from 5-amino-1-(5-phospho-D-ribosyl)imidazole-4-carboxamide (10-formyl THF route): step 1/1. It functions in the pathway purine metabolism; IMP biosynthesis via de novo pathway; IMP from 5-formamido-1-(5-phospho-D-ribosyl)imidazole-4-carboxamide: step 1/1. This chain is Bifunctional purine biosynthesis protein PurH, found in Campylobacter concisus (strain 13826).